The following is a 95-amino-acid chain: Aspartyl/glutamyl-tRNA(Asn/Gln) amidotransferase subunit C (95 aa).

The protein belongs to the GatC family. As to quaternary structure, heterotrimer of A, B and C subunits.

It carries out the reaction L-glutamyl-tRNA(Gln) + L-glutamine + ATP + H2O = L-glutaminyl-tRNA(Gln) + L-glutamate + ADP + phosphate + H(+). It catalyses the reaction L-aspartyl-tRNA(Asn) + L-glutamine + ATP + H2O = L-asparaginyl-tRNA(Asn) + L-glutamate + ADP + phosphate + 2 H(+). Functionally, allows the formation of correctly charged Asn-tRNA(Asn) or Gln-tRNA(Gln) through the transamidation of misacylated Asp-tRNA(Asn) or Glu-tRNA(Gln) in organisms which lack either or both of asparaginyl-tRNA or glutaminyl-tRNA synthetases. The reaction takes place in the presence of glutamine and ATP through an activated phospho-Asp-tRNA(Asn) or phospho-Glu-tRNA(Gln). The protein is Aspartyl/glutamyl-tRNA(Asn/Gln) amidotransferase subunit C of Rhodopseudomonas palustris (strain TIE-1).